Consider the following 323-residue polypeptide: NADH-ubiquinone oxidoreductase chain 1 (323 aa).

The next 8 helical transmembrane spans lie at 9–29, 76–96, 107–127, 145–165, 175–195, 227–247, 258–278, and 298–318; these read ILNP…LTLI, LFVL…PMPM, ILFV…SGWA, ISYE…SGGF, EATW…ISTL, LFFL…AVLF, EFTS…FLWV, and FLPL…ACAG.

This sequence belongs to the complex I subunit 1 family.

The protein resides in the mitochondrion inner membrane. It carries out the reaction a ubiquinone + NADH + 5 H(+)(in) = a ubiquinol + NAD(+) + 4 H(+)(out). Functionally, core subunit of the mitochondrial membrane respiratory chain NADH dehydrogenase (Complex I) that is believed to belong to the minimal assembly required for catalysis. Complex I functions in the transfer of electrons from NADH to the respiratory chain. The immediate electron acceptor for the enzyme is believed to be ubiquinone. The sequence is that of NADH-ubiquinone oxidoreductase chain 1 (MT-ND1) from Gadus morhua (Atlantic cod).